The sequence spans 220 residues: UPF0502 protein VVA1225 (220 aa).

This sequence belongs to the UPF0502 family.

The chain is UPF0502 protein VVA1225 from Vibrio vulnificus (strain YJ016).